The sequence spans 174 residues: Shikimate kinase (174 aa).

14-19 (GAGKST) lines the ATP pocket. Serine 18 contributes to the Mg(2+) binding site. Substrate contacts are provided by aspartate 36, arginine 60, and glycine 82. Arginine 120 is a binding site for ATP. Arginine 139 is a binding site for substrate. ATP is bound at residue glutamine 156.

Belongs to the shikimate kinase family. Monomer. Requires Mg(2+) as cofactor.

It localises to the cytoplasm. The catalysed reaction is shikimate + ATP = 3-phosphoshikimate + ADP + H(+). It functions in the pathway metabolic intermediate biosynthesis; chorismate biosynthesis; chorismate from D-erythrose 4-phosphate and phosphoenolpyruvate: step 5/7. Catalyzes the specific phosphorylation of the 3-hydroxyl group of shikimic acid using ATP as a cosubstrate. This chain is Shikimate kinase, found in Vibrio cholerae serotype O1 (strain ATCC 39541 / Classical Ogawa 395 / O395).